Consider the following 238-residue polypeptide: Proteasome subunit beta type-6 (238 aa).

Ala2 is subject to N-acetylalanine. Positions 2–33 (AAALAVRGAVSAPAFGPEALTPDWENREVSTG) are cleaved as a propeptide — removed in mature form. The active-site Nucleophile is Thr34. Thr68 bears the Phosphothreonine mark.

Belongs to the peptidase T1B family. The 26S proteasome consists of a 20S proteasome core and two 19S regulatory subunits. The 20S proteasome core is a barrel-shaped complex made of 28 subunits that are arranged in four stacked rings. The two outer rings are each formed by seven alpha subunits, and the two inner rings are formed by seven beta subunits. The proteolytic activity is exerted by three beta-subunits PSMB5, PSMB6 and PSMB7.

The protein resides in the cytoplasm. Its subcellular location is the nucleus. It carries out the reaction Cleavage of peptide bonds with very broad specificity.. Its function is as follows. Component of the 20S core proteasome complex involved in the proteolytic degradation of most intracellular proteins. This complex plays numerous essential roles within the cell by associating with different regulatory particles. Associated with two 19S regulatory particles, forms the 26S proteasome and thus participates in the ATP-dependent degradation of ubiquitinated proteins. The 26S proteasome plays a key role in the maintenance of protein homeostasis by removing misfolded or damaged proteins that could impair cellular functions, and by removing proteins whose functions are no longer required. Associated with the PA200 or PA28, the 20S proteasome mediates ubiquitin-independent protein degradation. This type of proteolysis is required in several pathways including spermatogenesis (20S-PA200 complex) or generation of a subset of MHC class I-presented antigenic peptides (20S-PA28 complex). Within the 20S core complex, PSMB6 displays a peptidylglutamyl-hydrolyzing activity also termed postacidic or caspase-like activity, meaning that the peptides bond hydrolysis occurs directly after acidic residues. In Rattus norvegicus (Rat), this protein is Proteasome subunit beta type-6 (Psmb6).